We begin with the raw amino-acid sequence, 535 residues long: CTP synthase (535 aa).

The Glutamine amidotransferase type-1 domain occupies R300–K535. Catalysis depends on for GATase activity residues C385, H509, and E511.

The protein belongs to the CTP synthase family.

It carries out the reaction UTP + L-glutamine + ATP + H2O = CTP + L-glutamate + ADP + phosphate + 2 H(+). Its pathway is pyrimidine metabolism; CTP biosynthesis via de novo pathway; CTP from UDP: step 2/2. Catalyzes the ATP-dependent amination of UTP to CTP with either L-glutamine or ammonia as the source of nitrogen. The polypeptide is CTP synthase (Encephalitozoon cuniculi (strain GB-M1) (Microsporidian parasite)).